Here is a 541-residue protein sequence, read N- to C-terminus: 2-succinyl-5-enolpyruvyl-6-hydroxy-3-cyclohexene-1-carboxylate synthase (541 aa).

The protein belongs to the TPP enzyme family. MenD subfamily. As to quaternary structure, homodimer. Mg(2+) serves as cofactor. It depends on Mn(2+) as a cofactor. Requires thiamine diphosphate as cofactor.

The enzyme catalyses isochorismate + 2-oxoglutarate + H(+) = 5-enolpyruvoyl-6-hydroxy-2-succinyl-cyclohex-3-ene-1-carboxylate + CO2. Its pathway is quinol/quinone metabolism; 1,4-dihydroxy-2-naphthoate biosynthesis; 1,4-dihydroxy-2-naphthoate from chorismate: step 2/7. The protein operates within quinol/quinone metabolism; menaquinone biosynthesis. In terms of biological role, catalyzes the thiamine diphosphate-dependent decarboxylation of 2-oxoglutarate and the subsequent addition of the resulting succinic semialdehyde-thiamine pyrophosphate anion to isochorismate to yield 2-succinyl-5-enolpyruvyl-6-hydroxy-3-cyclohexene-1-carboxylate (SEPHCHC). The sequence is that of 2-succinyl-5-enolpyruvyl-6-hydroxy-3-cyclohexene-1-carboxylate synthase from Leuconostoc citreum (strain KM20).